The sequence spans 901 residues: PGC-1 and ERR-induced regulator in muscle protein 1 (901 aa).

3 disordered regions span residues 29–511, 564–671, and 731–752; these read QAGL…MPAS, SLEG…MGPG, and RHQE…APPP. Residues 100–112 show a composition bias toward polar residues; the sequence is GQQTPSTSAQSEA. The segment covering 157-178 has biased composition (low complexity); sequence GEPAGSPESPVHSAAPQRSPGS. 5 stretches are compositionally biased toward polar residues: residues 267–276, 347–379, 387–418, 426–457, and 465–484; these read LSTSVSTTEQ, DESQ…QSTP, EPQS…QSTP, and EPQS…STPT. Over residues 608 to 624 the composition is skewed to low complexity; it reads PSSEEPGSGEVSGPLSP.

It is found in the cytoplasm. Its subcellular location is the nucleus. In terms of biological role, regulates the expression of selective PPARGC1A/B and ESRRA/B/G target genes with roles in glucose and lipid metabolism, energy transfer, contractile function, muscle mitochondrial biogenesis and oxidative capacity. Required for the efficient induction of MT-CO2, MT-CO3, COX4I1, TFB1M, TFB2M, POLRMT and SIRT3 by PPARGC1A. Positively regulates the PPARGC1A/ESRRG-induced expression of CKMT2, TNNI3 and SLC2A4 and negatively regulates the PPARGC1A/ESRRG-induced expression of PDK4. The protein is PGC-1 and ERR-induced regulator in muscle protein 1 (PERM1) of Bos taurus (Bovine).